The sequence spans 141 residues: MAKKIIGELKLQIPAGKANPSPPVGPALGQRGVNIMEFCKAFNERTKDMGSFNIPVVLTIYQDKSFTFITKKPPVTDLIKKAAGIQKGSDNPLKNKIGKITKAQVAEIAATKMEDLNAKSTEGAIKIVEGSARSMGIEIVD.

The protein belongs to the universal ribosomal protein uL11 family. Part of the ribosomal stalk of the 50S ribosomal subunit. Interacts with L10 and the large rRNA to form the base of the stalk. L10 forms an elongated spine to which L12 dimers bind in a sequential fashion forming a multimeric L10(L12)X complex. Post-translationally, one or more lysine residues are methylated.

In terms of biological role, forms part of the ribosomal stalk which helps the ribosome interact with GTP-bound translation factors. The chain is Large ribosomal subunit protein uL11 from Wolinella succinogenes (strain ATCC 29543 / DSM 1740 / CCUG 13145 / JCM 31913 / LMG 7466 / NCTC 11488 / FDC 602W) (Vibrio succinogenes).